The chain runs to 342 residues: Glyceraldehyde-3-phosphate dehydrogenase (342 aa).

NAD(+) contacts are provided by residues Arg12 to Ile13, Asp34, Lys78, and Thr120. Residues Ser151–Thr153 and Thr182 each bind D-glyceraldehyde 3-phosphate. Cys152 (nucleophile) is an active-site residue. Residue Asn183 coordinates NAD(+). Residues Arg197, Thr210–Gly211, and Arg233 contribute to the D-glyceraldehyde 3-phosphate site. Residue Asn322 coordinates NAD(+).

Belongs to the glyceraldehyde-3-phosphate dehydrogenase family. In terms of assembly, homotetramer.

It is found in the cytoplasm. The catalysed reaction is D-glyceraldehyde 3-phosphate + phosphate + NAD(+) = (2R)-3-phospho-glyceroyl phosphate + NADH + H(+). The protein operates within carbohydrate degradation; glycolysis; pyruvate from D-glyceraldehyde 3-phosphate: step 1/5. Functionally, catalyzes the oxidative phosphorylation of glyceraldehyde 3-phosphate (G3P) to 1,3-bisphosphoglycerate (BPG) using the cofactor NAD. The first reaction step involves the formation of a hemiacetal intermediate between G3P and a cysteine residue, and this hemiacetal intermediate is then oxidized to a thioester, with concomitant reduction of NAD to NADH. The reduced NADH is then exchanged with the second NAD, and the thioester is attacked by a nucleophilic inorganic phosphate to produce BPG. This is Glyceraldehyde-3-phosphate dehydrogenase (gap) from Aquifex aeolicus (strain VF5).